The sequence spans 417 residues: Tyrosine--tRNA ligase (417 aa).

Residue Tyr-36 coordinates L-tyrosine. The 'HIGH' region motif lies at 41–50 (PTADSLHIGH). L-tyrosine is bound by residues Tyr-170 and Gln-174. Residues 231–235 (KFGKS) carry the 'KMSKS' region motif. Lys-234 contributes to the ATP binding site. The 67-residue stretch at 351-417 (TNLVELLIEA…GKKKYFMIIH (67 aa)) folds into the S4 RNA-binding domain.

The protein belongs to the class-I aminoacyl-tRNA synthetase family. TyrS type 1 subfamily. In terms of assembly, homodimer.

The protein localises to the cytoplasm. It carries out the reaction tRNA(Tyr) + L-tyrosine + ATP = L-tyrosyl-tRNA(Tyr) + AMP + diphosphate + H(+). Its function is as follows. Catalyzes the attachment of tyrosine to tRNA(Tyr) in a two-step reaction: tyrosine is first activated by ATP to form Tyr-AMP and then transferred to the acceptor end of tRNA(Tyr). The protein is Tyrosine--tRNA ligase of Macrococcus caseolyticus (strain JCSC5402) (Macrococcoides caseolyticum).